Reading from the N-terminus, the 452-residue chain is Sensor histidine kinase HprS (452 aa).

Residues 1–9 (MKRLSITVR) lie on the Cytoplasmic side of the membrane. A helical transmembrane segment spans residues 10 to 30 (LTLLFILLLSVAGAGIVWTLY). Residues 31-158 (NGLASELKWR…ARHNMLEQYK (128 aa)) lie on the Periplasmic side of the membrane. The chain crosses the membrane as a helical span at residues 159 to 179 (INSIIICIVAIVLCSVLSPLL). At 180–452 (IRTGLREIKK…VFRITLPQRN (273 aa)) the chain is on the cytoplasmic side. In terms of domain architecture, HAMP spans 181-234 (RTGLREIKKLSGVTEALNYNDSREPVEVSALPRELKPLGQALNKMHHALVKDFE). Positions 242 to 452 (DLAHELRTPI…VFRITLPQRN (211 aa)) constitute a Histidine kinase domain. At His245 the chain carries Phosphohistidine; by autocatalysis.

Post-translationally, autophosphorylated.

Its subcellular location is the cell inner membrane. It catalyses the reaction ATP + protein L-histidine = ADP + protein N-phospho-L-histidine.. In terms of biological role, member of a two-component regulatory system HprR/HprS involved in response to hydrogen peroxide. Senses H(2)O(2), maybe via the redox state of the membrane. Activates HprR by phosphorylation. Can also phosphorylate CusR. The polypeptide is Sensor histidine kinase HprS (Escherichia coli (strain K12)).